The following is a 99-amino-acid chain: Large ribosomal subunit protein uL23c (99 aa).

Belongs to the universal ribosomal protein uL23 family. As to quaternary structure, part of the 50S ribosomal subunit.

The protein localises to the plastid. Its subcellular location is the chloroplast. Binds to 23S rRNA. This is Large ribosomal subunit protein uL23c (rpl23) from Emiliania huxleyi (Coccolithophore).